Reading from the N-terminus, the 2581-residue chain is Highly reducing polyketide synthase sorA (2581 aa).

The Ketosynthase family 3 (KS3) domain maps to 14–436 (SEPIAIIGMS…GSNAHIILED (423 aa)). Residues C187, H322, and H359 each act as for beta-ketoacyl synthase activity in the active site. Residues 574 to 868 (VFTGQGAQWN…VVEVGPHTAL (295 aa)) form a malonyl-CoA:ACP transacylase (MAT) domain region. Residues 966 to 1103 (HDLLGSIVEG…GLVSVELGES (138 aa)) are N-terminal hotdog fold. Positions 966-1270 (HDLLGSIVEG…GFSYQSLGRS (305 aa)) are dehydratase (DH) domain. The 308-residue stretch at 966–1273 (HDLLGSIVEG…YQSLGRSTSL (308 aa)) folds into the PKS/mFAS DH domain. H998 (proton acceptor; for dehydratase activity) is an active-site residue. The tract at residues 1119-1273 (TRRILPADLF…YQSLGRSTSL (155 aa)) is C-terminal hotdog fold. The Proton donor; for dehydratase activity role is filled by D1184. The methyltransferase (CMet) domain stretch occupies residues 1461-1568 (LEVGAATGAI…SSLLKPGGTL (108 aa)). An enoyl reductase (ER)domain region spans residues 1873–2184 (LKPDLLVFGD…AGDQIGKVVL (312 aa)). Residues 2207–2389 (VSYLIVGGSG…AVSIDLSVVN (183 aa)) form a ketoreductase (KR) domain region. The 78-residue stretch at 2497 to 2574 (DAVRVVGTAI…QLAIDVVDRS (78 aa)) folds into the Carrier domain. Position 2534 is an O-(pantetheine 4'-phosphoryl)serine (S2534).

Its pathway is secondary metabolite biosynthesis. Functionally, highly reducing polyketide synthase; part of the gene cluster that mediates the biosynthesis of sorbicillinoids, a diverse group of yellow secondary metabolites that restrict growth of competing pathogenic fungi but not of bacteria. Sorbicillinoids biosynthesis requires the action of two PKSs. SorA iteratively combines three acetyl units and the growing chain is modified by the ketoacyl reductase subunit, and optional by the enoyl reductase subunit in the second cycle. The polyketide is then handed over to the PKS SorB, which adds three more acetyl units, and two methyl groups. SorB releases an aldehyde, which undergoes spontaneous cyclization resulting in the formation of sorbicillin or 2',3'-dihydrosorbicillin. The monooxygenase sorC oxidizes sorbicillin and 2',3'-dihydrosorbicillin to 2',3'-dihydrosorbicillinol and sorbicillinol, respectively. The oxidoreductase sorD further converts sorbicillinol into oxosorbicillinol. Sorbicillinol is the building block for the other sorbicillinoids such as disorbicillinol, bisvertinolon, and dihydrobisvertinolone. The sequence is that of Highly reducing polyketide synthase sorA from Penicillium rubens (strain ATCC 28089 / DSM 1075 / NRRL 1951 / Wisconsin 54-1255) (Penicillium chrysogenum).